The following is a 347-amino-acid chain: Anthranilate phosphoribosyltransferase (347 aa).

5-phospho-alpha-D-ribose 1-diphosphate is bound by residues Gly88, 91–92 (GD), Thr96, 98–101 (NIST), 116–124 (KHGGRSVSS), and Ser128. Gly88 lines the anthranilate pocket. Position 100 (Ser100) interacts with Mg(2+). Residue Arg174 participates in anthranilate binding. Mg(2+) is bound by residues Asp233 and Glu234.

This sequence belongs to the anthranilate phosphoribosyltransferase family. As to quaternary structure, homodimer. It depends on Mg(2+) as a cofactor.

The enzyme catalyses N-(5-phospho-beta-D-ribosyl)anthranilate + diphosphate = 5-phospho-alpha-D-ribose 1-diphosphate + anthranilate. Its pathway is amino-acid biosynthesis; L-tryptophan biosynthesis; L-tryptophan from chorismate: step 2/5. In terms of biological role, catalyzes the transfer of the phosphoribosyl group of 5-phosphorylribose-1-pyrophosphate (PRPP) to anthranilate to yield N-(5'-phosphoribosyl)-anthranilate (PRA). The chain is Anthranilate phosphoribosyltransferase from Polaromonas sp. (strain JS666 / ATCC BAA-500).